The following is a 439-amino-acid chain: Coiled-coil domain-containing protein 166 (439 aa).

Positions 1 to 28 (MAPKKKRGPSAGSQPGGAAAAGAEQPLS) are disordered. The segment covering 9–23 (PSAGSQPGGAAAAGA) has biased composition (low complexity). Coiled-coil stretches lie at residues 27 to 74 (LSER…EENR) and 121 to 213 (DGVR…VRAL). The tract at residues 276-439 (PGGPPLWERP…AAAEASPGRA (164 aa)) is disordered. The span at 338–365 (VLSSMDSRVPSLATSKVGSRMPSLTASR) shows a compositional bias: polar residues. Composition is skewed to low complexity over residues 376-392 (SLEGSGISSGSSPRVSS) and 428-439 (AEAAAEASPGRA).

In Homo sapiens (Human), this protein is Coiled-coil domain-containing protein 166 (CCDC166).